A 115-amino-acid polypeptide reads, in one-letter code: Large ribosomal subunit protein bL20c (115 aa).

The protein belongs to the bacterial ribosomal protein bL20 family.

It localises to the plastid. The protein resides in the chloroplast. Binds directly to 23S ribosomal RNA and is necessary for the in vitro assembly process of the 50S ribosomal subunit. It is not involved in the protein synthesizing functions of that subunit. This chain is Large ribosomal subunit protein bL20c, found in Pleurastrum terricola (Filamentous green alga).